A 537-amino-acid polypeptide reads, in one-letter code: Probable alpha-galactosidase A (537 aa).

The first 23 residues, 1 to 23 (MNQGTKSILLAATLAAIPWQVYG), serve as a signal peptide directing secretion. Cysteines 46 and 78 form a disulfide. Residues Asn49, Asn87, Asn93, and Asn123 are each glycosylated (N-linked (GlcNAc...) asparagine). A disulfide bridge connects residues Cys126 and Cys156. Asp154 functions as the Nucleophile in the catalytic mechanism. An N-linked (GlcNAc...) asparagine glycan is attached at Asn203. Asp212 acts as the Proton donor in catalysis. N-linked (GlcNAc...) asparagine glycans are attached at residues Asn355 and Asn436. Positions 413-537 (CSSVVPTGLV…FGLPSGVQLS (125 aa)) constitute a Ricin B-type lectin domain. 2 disulfides stabilise this stretch: Cys430-Cys444 and Cys469-Cys482. Asn491 is a glycosylation site (N-linked (GlcNAc...) asparagine).

This sequence belongs to the glycosyl hydrolase 27 family.

It is found in the secreted. It catalyses the reaction Hydrolysis of terminal, non-reducing alpha-D-galactose residues in alpha-D-galactosides, including galactose oligosaccharides, galactomannans and galactolipids.. Functionally, hydrolyzes a variety of simple alpha-D-galactoside as well as more complex molecules such as oligosaccharides and polysaccharides. The sequence is that of Probable alpha-galactosidase A (aglA) from Aspergillus niger (strain ATCC MYA-4892 / CBS 513.88 / FGSC A1513).